We begin with the raw amino-acid sequence, 57 residues long: U-Asilidin(1)-Mar2a (57 aa).

Residues 1–24 form the signal peptide; it reads MAPLLKLNILLLIVLICFTFHANA. 3 cysteine pairs are disulfide-bonded: Cys-28–Cys-44, Cys-35–Cys-48, and Cys-43–Cys-53.

Belongs to the asilidin-1 family. As to expression, expressed by the venom gland. Exclusively expressed in the venom thoracic glands (and not in body tissues).

The protein resides in the secreted. May act as a neurotoxin. This chain is U-Asilidin(1)-Mar2a, found in Machimus arthriticus (Breck robberfly).